The sequence spans 364 residues: WAT1-related protein At5g47470 (364 aa).

A run of 10 helical transmembrane segments spans residues 28-48 (MVIV…SLLM), 59-79 (FTIV…FAIL), 93-113 (LIGK…SLFL), 124-144 (ATAM…IVGL), 158-178 (ILGT…HSTS), 197-217 (VVGC…VVLQ), 228-248 (ISLS…VLLL), 255-275 (VLAS…LAGA), 293-313 (PVFV…FAVL), and 319-339 (VSLG…LVLW). The region spanning 40 to 172 (VYAGNSLLMS…LCVFGALAMS (133 aa)) is the EamA 1 domain. The EamA 2 domain occupies 219 to 338 (STLAEFPAPI…LMFVGLYLVL (120 aa)).

The protein belongs to the drug/metabolite transporter (DMT) superfamily. Plant drug/metabolite exporter (P-DME) (TC 2.A.7.4) family.

It localises to the membrane. This chain is WAT1-related protein At5g47470, found in Arabidopsis thaliana (Mouse-ear cress).